We begin with the raw amino-acid sequence, 140 residues long: ATP synthase epsilon chain (140 aa).

This sequence belongs to the ATPase epsilon chain family. F-type ATPases have 2 components, CF(1) - the catalytic core - and CF(0) - the membrane proton channel. CF(1) has five subunits: alpha(3), beta(3), gamma(1), delta(1), epsilon(1). CF(0) has three main subunits: a, b and c.

The protein resides in the cell inner membrane. Its function is as follows. Produces ATP from ADP in the presence of a proton gradient across the membrane. The protein is ATP synthase epsilon chain (atpC) of Vibrio alginolyticus.